Consider the following 917-residue polypeptide: MDAGFFRGTSAEQDNRFSNKQKKLLKQLKFAECLEKKVDMSKVNLEVIKPWITKRVTEILGFEDDVVIEFIFNQLEVKNPDSKMMQINLTGFLNGKNAREFMGELWPLLLSAQENIAGIPSAFLELKKEEIKQRQIEQEKLASMKKQDEDKDKRDKEEKESSREKRERSRSPRRRKSRSPSPRRRSSPVRRERKRSHSRSPRHRTKSRSPSPAPEKKEKTPELPEPSVKVKEPSVQEATSTSDILKVPKPEPIPEPKEPSPEKNSKKEKEKEKTRPRSRSRSKSRSRTRSRSPSHTRPRRRHRSRSRSYSPRRRPSPRRRPSPRRRTPPRRMPPPPRHRRSRSPVRRRRRSSASLSGSSSSSSSSRSRSPPKKPPKRTSSPPRKTRRLSPSASPPRRRHRPSPPATPPPKTRHSPTPQQSNRTRKSRVSVSPGRTSGKVTKHKGTEKRESPSPAPKPRKVELSESEEDKGGKMAAADSVQQRRQYRRQNQQSSSDSGSSSSSEDERPKRSHVKNGEVGRRRRHSPSRSASPSPRKRQKETSPRMQMGKRWQSPVTKSGRRRRSPSPPPTRRRRSPSPAPPPRRRRTPTPPPRRRTPSPPPRRRSPSPRRYSPPIQRRYSPSPPPKRRTASPPPPPKRRASPSPPPKRRVSHSPPPKQRSSPVTKRRSPSLSSKHRKGSSPSRSTREARSPQPNKRHSPSPRPRAPQTSSPPPVRRGASSSPQRRQSPSPSTRPIRRVSRTPEPKKIKKAASPSPQSVRRVSSSRSVSGSPEPAAKKPPAPTSPVQSQSPSTNWSPAVPVKKAKSPTPSPSPPRNSDQEGGGKKKKKKKDKKHKKDKKHKKHKKHKKEKAVAAAAAAAVTPAAIAAATTTLAQEEPVAAPEPKKETESEAEDNLDDLEKHLREKALRSMRKAQVSPQS.

Methionine 1 is subject to N-acetylmethionine. A necessary for DNA and RNA-binding region spans residues 1–151 (MDAGFFRGTS…ASMKKQDEDK (151 aa)). Positions 1 to 156 (MDAGFFRGTS…QDEDKDKRDK (156 aa)) are necessary for mRNA 3'-end cleavage and cytoplasmic accumulation. Citrulline is present on arginine 7. The PWI domain occupies 27 to 126 (QLKFAECLEK…AGIPSAFLEL (100 aa)). Residue lysine 127 forms a Glycyl lysine isopeptide (Lys-Gly) (interchain with G-Cter in SUMO2) linkage. The segment covering 139 to 170 (EKLASMKKQDEDKDKRDKEEKESSREKRERSR) has biased composition (basic and acidic residues). The tract at residues 139-917 (EKLASMKKQD…MRKAQVSPQS (779 aa)) is disordered. The residue at position 140 (lysine 140) is an N6-acetyllysine. Over residues 171 to 207 (SPRRRKSRSPSPRRRSSPVRRERKRSHSRSPRHRTKS) the composition is skewed to basic residues. Positions 214 to 234 (PEKKEKTPELPEPSVKVKEPS) are enriched in basic and acidic residues. Position 220 is a phosphothreonine (threonine 220). Serine 227 carries the post-translational modification Phosphoserine. Lysine 231 is covalently cross-linked (Glycyl lysine isopeptide (Lys-Gly) (interchain with G-Cter in SUMO1); alternate). A Glycyl lysine isopeptide (Lys-Gly) (interchain with G-Cter in SUMO2); alternate cross-link involves residue lysine 231. 2 positions are modified to phosphoserine: serine 234 and serine 240. Threonine 241 carries the post-translational modification Phosphothreonine. Over residues 246–275 (KVPKPEPIPEPKEPSPEKNSKKEKEKEKTR) the composition is skewed to basic and acidic residues. A Glycyl lysine isopeptide (Lys-Gly) (interchain with G-Cter in SUMO2) cross-link involves residue lysine 249. Serine 260 bears the Phosphoserine mark. Basic residues-rich tracts occupy residues 276–329 (PRSR…RTPP) and 336–351 (PRHRRSRSPVRRRRRS). The necessary for speckles and matrix localization stretch occupies residues 300 to 702 (RRHRSRSRSY…NKRHSPSPRP (403 aa)). Residues 352-368 (SASLSGSSSSSSSSRSR) are compositionally biased toward low complexity. Residues serine 389, serine 391, serine 393, and serine 402 each carry the phosphoserine modification. The residue at position 406 (threonine 406) is a Phosphothreonine. Position 414 is a phosphoserine (serine 414). Threonine 416 carries the post-translational modification Phosphothreonine. 4 positions are modified to phosphoserine: serine 420, serine 429, serine 431, and serine 436. Residues 428 to 438 (VSVSPGRTSGK) show a composition bias toward polar residues. A Glycyl lysine isopeptide (Lys-Gly) (interchain with G-Cter in SUMO2) cross-link involves residue lysine 447. Phosphoserine occurs at positions 450 and 452. Residue lysine 459 forms a Glycyl lysine isopeptide (Lys-Gly) (interchain with G-Cter in SUMO2) linkage. Phosphoserine occurs at positions 463 and 465. Residue lysine 472 forms a Glycyl lysine isopeptide (Lys-Gly) (interchain with G-Cter in SUMO2) linkage. Residue serine 478 is modified to Phosphoserine. The span at 478 to 501 (SVQQRRQYRRQNQQSSSDSGSSSS) shows a compositional bias: low complexity. Over residues 503–518 (EDERPKRSHVKNGEVG) the composition is skewed to basic and acidic residues. 7 positions are modified to phosphoserine: serine 524, serine 526, serine 528, serine 530, serine 532, serine 563, and serine 565. Basic residues predominate over residues 557–574 (SGRRRRSPSPPPTRRRRS). A Phosphothreonine modification is found at threonine 569. Residues serine 574 and serine 576 each carry the phosphoserine modification. Basic residues predominate over residues 581–606 (PRRRRTPTPPPRRRTPSPPPRRRSPS). Threonine 586, threonine 588, and threonine 595 each carry phosphothreonine. At serine 597 the chain carries Phosphoserine. Low complexity predominate over residues 607–619 (PRRYSPPIQRRYS). At tyrosine 610 the chain carries Phosphotyrosine. Serine 611, serine 619, and serine 621 each carry phosphoserine. Threonine 628 bears the Phosphothreonine mark. Residues serine 630, serine 640, serine 642, serine 650, and serine 652 each carry the phosphoserine modification. Residues 635–650 (PKRRASPSPPPKRRVS) show a composition bias toward basic residues. Residues 663–677 (TKRRSPSLSSKHRKG) are compositionally biased toward basic residues. Over residues 699-713 (SPRPRAPQTSSPPPV) the composition is skewed to pro residues. A phosphoserine mark is found at serine 708, serine 709, serine 718, serine 720, serine 726, and serine 728. Composition is skewed to low complexity over residues 714 to 732 (RRGASSSPQRRQSPSPSTR), 749 to 772 (AASPSPQSVRRVSSSRSVSGSPEP), and 782 to 799 (SPVQSQSPSTNWSPAVPV). A Phosphothreonine modification is found at threonine 731. Phosphoserine occurs at positions 751, 753, 761, 765, 767, 769, 782, 786, 788, and 790. Threonine 791 carries the post-translational modification Phosphothreonine. Residues serine 794 and serine 804 each carry the phosphoserine modification. A Phosphothreonine modification is found at threonine 806. Phosphoserine occurs at positions 808, 810, and 815. Positions 822–847 (KKKKKKKDKKHKKDKKHKKHKKHKKE) are enriched in basic residues. The segment covering 850–879 (VAAAAAAAVTPAAIAAATTTLAQEEPVAAP) has biased composition (low complexity). Lysine 882 participates in a covalent cross-link: Glycyl lysine isopeptide (Lys-Gly) (interchain with G-Cter in SUMO2). A Phosphothreonine modification is found at threonine 885. Residue serine 887 is modified to Phosphoserine. The span at 895–905 (DLEKHLREKAL) shows a compositional bias: basic and acidic residues. Serine 914 bears the Phosphoserine mark.

Belongs to the splicing factor SR family. In terms of assembly, identified in the spliceosome C complex. Found in a pre-mRNA splicing complex with SFRS4, SFRS5, SNRP70, SNRPA1, SRRM1 and SRRM2. Component of the minor spliceosome, which splices U12-type introns. Found in a pre-mRNA exonic splicing enhancer (ESE) complex with SNRP70, SNRPA1, SRRM1 and TRA2B/SFRS10. Found in a mRNA splicing-dependent exon junction complex (EJC) with DEK, PRPF8, NCBP1, RBM8A, RNPS1, SRRM1 and ALYREF/THOC4. Interacts with DDX39B, CPSF1, RBM8A, RNPS1, and ALYREF/THOC4. Seems to be a compound of RNA export complexes that are released from speckles in a ATP-dependent manner. Post-translationally, phosphorylated on multiple serine and threonine residues by DYRK3 during the G2-to-M transition, after the nuclear-envelope breakdown. Phosphorylation by DYRK3 promotes disassembly of nuclear speckles. Citrullinated by PADI4.

Its function is as follows. Part of pre- and post-splicing multiprotein mRNP complexes. As a component of the minor spliceosome, involved in the splicing of U12-type introns in pre-mRNAs. Involved in numerous pre-mRNA processing events. Promotes constitutive and exonic splicing enhancer (ESE)-dependent splicing activation by bridging together sequence-specific (SR family proteins, SFRS4, SFRS5 and TRA2B/SFRS10) and basal snRNP (SNRP70 and SNRPA1) factors of the spliceosome. Stimulates mRNA 3'-end cleavage independently of the formation of an exon junction complex. Binds both pre-mRNA and spliced mRNA 20-25 nt upstream of exon-exon junctions. Binds RNA and DNA with low sequence specificity and has similar preference for either double- or single-stranded nucleic acid substrates. This is Serine/arginine repetitive matrix protein 1 (SRRM1) from Pongo abelii (Sumatran orangutan).